The sequence spans 37 residues: Large ribosomal subunit protein bL36 (37 aa).

The protein belongs to the bacterial ribosomal protein bL36 family.

This Legionella pneumophila subsp. pneumophila (strain Philadelphia 1 / ATCC 33152 / DSM 7513) protein is Large ribosomal subunit protein bL36.